The following is a 1060-amino-acid chain: Protein transport protein Sec16B (1060 aa).

Positions 1 to 86 (MELWAPQRLP…GDWHQPVSGV (86 aa)) are disordered. A required for endoplasmic reticulum localization region spans residues 34–224 (RPVPHSWHNG…PSLASESNLL (191 aa)). Basic and acidic residues predominate over residues 41–50 (HNGERFHQWQ). Polar residues predominate over residues 51–60 (DNRGSPQPQQ). Phosphoserine is present on residues S55, S143, S167, S188, and S191. Disordered stretches follow at residues 163–236 (ENQH…SSSY), 245–264 (APER…QADV), 711–733 (KVAG…GGTT), 770–796 (PSPQ…GTPR), and 834–1060 (PGEN…TQPC). Polar residues-rich tracts occupy residues 165 to 195 (QHSP…NSGQ) and 213 to 222 (NKPSLASESN). Residues 223-236 (LLQQRESGLSSSSY) are compositionally biased toward low complexity. A phosphoserine mark is found at S254 and S258. A central conserved domain (CCD); required for localization to endoplasmic reticulum exit sites region spans residues 271 to 713 (APMKFYIPHV…LRRQLEQKVA (443 aa)). The span at 837–847 (NTVSQETSQPP) shows a compositional bias: polar residues. T858 bears the Phosphothreonine mark. S868, S871, S874, S882, and S883 each carry phosphoserine. Basic and acidic residues-rich tracts occupy residues 875–890 (AKED…DKNS) and 899–908 (KLGDGKEHTK). Over residues 909 to 918 (SSGFGWFSWF) the composition is skewed to low complexity. The segment covering 930 to 941 (GDEDSSDSPDSE) has biased composition (acidic residues). The span at 991-1001 (AAAGAGVGGLS) shows a compositional bias: gly residues. Polar residues predominate over residues 1031–1046 (NPSQVPQLPTATSLNR).

The protein belongs to the SEC16 family. In terms of assembly, SEC16A and SEC16B are each present in multiple copies in a heteromeric complex. Interacts with TFG. Interacts with SEC13. In terms of tissue distribution, ubiquitous.

The protein localises to the endoplasmic reticulum membrane. The protein resides in the golgi apparatus membrane. Functionally, plays a role in the organization of the endoplasmic reticulum exit sites (ERES), also known as transitional endoplasmic reticulum (tER). Required for secretory cargo traffic from the endoplasmic reticulum to the Golgi apparatus. Involved in peroxisome biogenesis. Regulates the transport of peroxisomal biogenesis factors PEX3 and PEX16 from the ER to peroxisomes. The polypeptide is Protein transport protein Sec16B (SEC16B) (Homo sapiens (Human)).